A 354-amino-acid polypeptide reads, in one-letter code: C-C chemokine receptor type 5 (354 aa).

The Extracellular segment spans residues 1 to 32 (MDFQGSVPTYSYDIDYGMSAPCQKINVKQIAA). Residue serine 6 is glycosylated (O-linked (GalNAc...) serine). Sulfotyrosine occurs at positions 10, 12, and 16. Intrachain disulfides connect cysteine 22/cysteine 271 and cysteine 103/cysteine 180. A helical membrane pass occupies residues 33-60 (QLLPPLYSLVFIFGFVGNMMVFLILISC). The Cytoplasmic segment spans residues 61-70 (KKLKSVTDIY). The helical transmembrane segment at 71–91 (LLNLAISDLLFLLTLPFWAHY) threads the bilayer. At 92–104 (AANEWVFGNIMCK) the chain is on the extracellular side. The chain crosses the membrane as a helical span at residues 105–126 (VFTGLYHIGYFGGIFFIILLTI). Residues 127 to 143 (DRYLAIVHAVFALKVRT) are Cytoplasmic-facing. Residues 144–168 (VNFGVITSVVTWAVAVFASLPEIIF) traverse the membrane as a helical segment. Residues 169 to 200 (TRSQKEGFHYTCSPHFPHTQYHFWKSFQTLKM) lie on the Extracellular side of the membrane. Residues 201 to 220 (VILSLILPLLVMVICYSGIL) traverse the membrane as a helical segment. At 221–237 (HTLFRCRNEKKRHRAVR) the chain is on the cytoplasmic side. Residues 238–262 (LIFAIMIVYFLFWTPYNIVLLLTTF) form a helical membrane-spanning segment. The Extracellular segment spans residues 263–279 (QEFFGLNNCSSSNRLDQ). The helical transmembrane segment at 280 to 303 (AMQATETLGMTHCCLNPVIYAFVG) threads the bilayer. Residues 304–354 (EKFRSYLSVFFRKHMVKRFCKRCSIFQQDNPDRASSVYTRSTGEHEVSTGL) are Cytoplasmic-facing. 2 S-palmitoyl cysteine lipidation sites follow: cysteine 323 and cysteine 326. Phosphoserine; by BARK1 occurs at positions 338, 339, 344, and 351.

The protein belongs to the G-protein coupled receptor 1 family. As to quaternary structure, interacts with PRAF2. Efficient ligand binding to CCL3/MIP-1alpha and CCL4/MIP-1beta requires sulfation, O-glycosylation and sialic acid modifications. Glycosylation on Ser-6 is required for efficient binding of CCL4. Interacts with GRK2. Interacts with ARRB1 and ARRB2. Interacts with CNIH4. Interacts with S100A4; this interaction stimulates T-lymphocyte chemotaxis. In terms of processing, sulfated on at least 2 of the N-terminal tyrosines. Sulfation is required for efficient binding of the chemokines, CCL3 and CCL4. Post-translationally, O-glycosylated, but not N-glycosylated. Ser-6 appears to be the major site. Also sialylated glycans present which contribute to chemokine binding. Palmitoylation in the C-terminal is important for cell surface expression. In terms of processing, phosphorylation on serine residues in the C-terminal is stimulated by binding CC chemokines especially by APO-RANTES.

The protein resides in the cell membrane. Receptor for a number of inflammatory CC-chemokines including CCL3/MIP-1-alpha, CCL4/MIP-1-beta and RANTES and subsequently transduces a signal by increasing the intracellular calcium ion level. May play a role in the control of granulocytic lineage proliferation or differentiation. Participates in T-lymphocyte migration to the infection site by acting as a chemotactic receptor. This chain is C-C chemokine receptor type 5 (Ccr5), found in Mus musculus (Mouse).